The following is a 596-amino-acid chain: Probable lysosomal cobalamin transporter (596 aa).

Transmembrane regions (helical) follow at residues Ile-13–Phe-33, Val-45–Val-65, Val-99–Ala-119, Leu-150–Gly-170, Leu-201–Leu-221, Leu-318–Thr-338, Gly-353–Ala-373, Ile-381–Ile-401, Ile-425–Val-445, and Val-512–Phe-532. Residue Asn-543 is glycosylated (N-linked (GlcNAc...) asparagine). A disordered region spans residues Gly-576 to Gly-596. Over residues Tyr-584–Gly-596 the composition is skewed to gly residues.

The protein belongs to the LIMR family. LMBRD1 subfamily.

The protein localises to the lysosome membrane. In terms of biological role, probable lysosomal cobalamin transporter. Required to export cobalamin from lysosomes allowing its conversion to cofactors. The chain is Probable lysosomal cobalamin transporter from Podospora anserina (strain S / ATCC MYA-4624 / DSM 980 / FGSC 10383) (Pleurage anserina).